The following is a 62-amino-acid chain: DCPSGWSSYEGHCYRFFHPPKDWADAERFCTEQAKGGALVSIQRFGEEDFVSNLITKNLQRG.

C2 and C13 are disulfide-bonded. The 54-residue stretch at 9 to 62 (YEGHCYRFFHPPKDWADAERFCTEQAKGGALVSIQRFGEEDFVSNLITKNLQRG) folds into the C-type lectin domain.

Belongs to the snaclec family. Heterodimer; disulfide-linked. Expressed by the venom gland.

Its subcellular location is the secreted. In terms of biological role, snaclec that binds to von Willebrand factor (VWF) and induces its interaction with GPIbalpha (GP1BA) (via the vWF A1 domain), resulting in platelet aggregation. Intravenous injection in mice induces a dose-dependent drop in platelet count (thrombocytopenia). Pretreatment by intravenous injection by this protein in mice potentiates the hemorrhagic lesion in the skin provoked by the metalloproteinase BaP1 intradermally injected. This result is not observed when both BaP1 and this protein are injected simultaneously. This is Snaclec aspercetin subunit alpha from Bothrops asper (Terciopelo).